A 799-amino-acid polypeptide reads, in one-letter code: Protein-lysine N-methyltransferase SMYD4 (799 aa).

An S-adenosyl-L-methionine-binding site is contributed by 112-114; sequence RSA. One can recognise an SET domain in the interval 233–570; sequence LSVSLCTHPL…KGQEILHCYG (338 aa). Residues Cys296, Cys299, Cys309, Cys312, Cys318, Cys322, His331, and Cys335 each contribute to the Zn(2+) site. An MYND-type zinc finger spans residues 296-335; it reads CHRCLKHTLATVPCGSCSYAKYCSQECMQQAWDLYHSTEC. S-adenosyl-L-methionine is bound by residues 535–536, Tyr569, and Phe591; that span reads NH.

It belongs to the class V-like SAM-binding methyltransferase superfamily. In terms of assembly, interacts (via MYND-type zinc finger) with HDAC1.

It is found in the nucleus. Its subcellular location is the cytoplasm. It carries out the reaction L-lysyl-[protein] + S-adenosyl-L-methionine = N(6)-methyl-L-lysyl-[protein] + S-adenosyl-L-homocysteine + H(+). Its function is as follows. Protein-lysine N-methyltransferase. Monomethylates PRMT5, modulating its transcriptional activity. May also act as a histone methyltransferase. Plays a critical role in cardiac development. Acts as a key epigenetic regulator of gene expression during cardiac development via its dual activities as a methyltransferase and negative regulator of HDAC1. This Mus musculus (Mouse) protein is Protein-lysine N-methyltransferase SMYD4 (Smyd4).